Consider the following 140-residue polypeptide: Chromatin accessibility complex 16kD protein (140 aa).

A disordered region spans residues 111 to 140 (LNRSAGSDDDDDDDDDDDEEESESESESDE). Residues 117–140 (SDDDDDDDDDDDEEESESESESDE) show a composition bias toward acidic residues.

As to quaternary structure, component of the chromatin accessibility complex (CHRAC), composed of Chrac-14, Chrac-16, Acf and Iswi. Forms a heterodimer with Chrac-14. The Chrac-14/Chrac-16 heterodimer interacts with Acf (via N-terminus). Stabilizes the interaction between Chrac-14 and Iswi.

It localises to the nucleus. In terms of biological role, histone-like protein which promotes nucleosome sliding of ATP-dependent nucleosome remodeling complexes. Part of the chromatin-accessibility complex (CHRAC) which uses energy/ATP to increase the general accessibility of DNA in chromatin. As a heterodimer with Chrac-14, binds DNA and facilitates nucleosome sliding by Acf. As part of the CHRAC complex, required for oogenesis. The sequence is that of Chromatin accessibility complex 16kD protein from Drosophila melanogaster (Fruit fly).